Here is a 260-residue protein sequence, read N- to C-terminus: Spectinomycin 9-adenylyltransferase (260 aa).

The catalysed reaction is spectinomycin + ATP = 9-O-adenylylspectinomycin + diphosphate. Mediates bacterial resistance to the antibiotic spectinomycin but not streptomycin. In Staphylococcus aureus (strain Mu50 / ATCC 700699), this protein is Spectinomycin 9-adenylyltransferase (ant1).